A 65-amino-acid polypeptide reads, in one-letter code: Large ribosomal subunit protein bL35 (65 aa).

It belongs to the bacterial ribosomal protein bL35 family.

In Chromobacterium violaceum (strain ATCC 12472 / DSM 30191 / JCM 1249 / CCUG 213 / NBRC 12614 / NCIMB 9131 / NCTC 9757 / MK), this protein is Large ribosomal subunit protein bL35.